The following is a 212-amino-acid chain: Thymidylate kinase (212 aa).

Residue 10-17 participates in ATP binding; the sequence is GPEGAGKT.

The protein belongs to the thymidylate kinase family.

The enzyme catalyses dTMP + ATP = dTDP + ADP. In terms of biological role, phosphorylation of dTMP to form dTDP in both de novo and salvage pathways of dTTP synthesis. The chain is Thymidylate kinase from Bacillus pumilus (strain SAFR-032).